A 367-amino-acid polypeptide reads, in one-letter code: Aminomethyltransferase (367 aa).

The protein belongs to the GcvT family. As to quaternary structure, the glycine cleavage system is composed of four proteins: P, T, L and H.

It carries out the reaction N(6)-[(R)-S(8)-aminomethyldihydrolipoyl]-L-lysyl-[protein] + (6S)-5,6,7,8-tetrahydrofolate = N(6)-[(R)-dihydrolipoyl]-L-lysyl-[protein] + (6R)-5,10-methylene-5,6,7,8-tetrahydrofolate + NH4(+). The glycine cleavage system catalyzes the degradation of glycine. This is Aminomethyltransferase from Mycobacterium bovis (strain ATCC BAA-935 / AF2122/97).